The primary structure comprises 86 residues: MVKLRLKRCGRKQRAIYRIVAIDVRSRREGRDLRKVGFYDPIKNQTYSNVPAILYFLEKGAQPTGTVHDISKKAEVFKELRINQTK.

It belongs to the bacterial ribosomal protein bS16 family.

Its subcellular location is the plastid. It is found in the chloroplast. The chain is Small ribosomal subunit protein bS16c from Liriodendron tulipifera (Tuliptree).